A 253-amino-acid chain; its full sequence is Isoprenyl transferase (253 aa).

Aspartate 32 is a catalytic residue. Aspartate 32 lines the Mg(2+) pocket. Residues 33 to 36 (GNGR), tryptophan 37, arginine 45, histidine 49, and 77 to 79 (STE) each bind substrate. Asparagine 80 functions as the Proton acceptor in the catalytic mechanism. Substrate-binding positions include tryptophan 81, arginine 83, arginine 200, and 206–208 (RLS). Glutamate 219 contributes to the Mg(2+) binding site.

Belongs to the UPP synthase family. In terms of assembly, homodimer. Mg(2+) serves as cofactor.

Its function is as follows. Catalyzes the condensation of isopentenyl diphosphate (IPP) with allylic pyrophosphates generating different type of terpenoids. The chain is Isoprenyl transferase from Clostridium perfringens (strain 13 / Type A).